The chain runs to 379 residues: MSEFLPFSRPAMGVEELAAVKEVLESGWITTGPKNQALEQAFCQLTGNQHAIAVSSATAGMHITLMALEIGKGDEVITPSLTWVSTLNMISLLGATPVMVDVDRDTLMVTPEAIESAITPRTKAIIPVHYAGAPADIDAIRAIGERYGIAVIEDAAHAVGTYYKGRHIGAKGTAIFSFHAIKNITCAEGGLIVTDNENLARQLRMLKFHGLGVDAYDRQTWGRAPQAEVLTPGYKYNLTDINAAIALTQLAKLEHLNTRRREIAQQYQQALAALPFQPLSLPAWPHVHAWHLFIIRVDEQRCGISRDALMEALKERGIGTGLHFRAAHTQKYYRERFPTLSLPNTEWNSERICSLPLFPDMTTADADRVITALQQLAGQ.

Lysine 182 bears the N6-(pyridoxal phosphate)lysine mark.

The protein belongs to the DegT/DnrJ/EryC1 family. ArnB subfamily. As to quaternary structure, homodimer. It depends on pyridoxal 5'-phosphate as a cofactor.

It carries out the reaction UDP-4-amino-4-deoxy-beta-L-arabinose + 2-oxoglutarate = UDP-beta-L-threo-pentopyranos-4-ulose + L-glutamate. The protein operates within nucleotide-sugar biosynthesis; UDP-4-deoxy-4-formamido-beta-L-arabinose biosynthesis; UDP-4-deoxy-4-formamido-beta-L-arabinose from UDP-alpha-D-glucuronate: step 2/3. Its pathway is bacterial outer membrane biogenesis; lipopolysaccharide biosynthesis. Functionally, catalyzes the conversion of UDP-4-keto-arabinose (UDP-Ara4O) to UDP-4-amino-4-deoxy-L-arabinose (UDP-L-Ara4N). The modified arabinose is attached to lipid A and is required for resistance to polymyxin and cationic antimicrobial peptides. The chain is UDP-4-amino-4-deoxy-L-arabinose--oxoglutarate aminotransferase from Shigella boydii serotype 4 (strain Sb227).